The primary structure comprises 288 residues: L-xylulose reductase (288 aa).

Positions 39, 113, and 147 each coordinate NADP(+). Serine 181 serves as the catalytic Proton donor. Positions 196, 200, 228, and 230 each coordinate NADP(+). Tyrosine 196 serves as the catalytic Proton acceptor. The active-site Lowers pKa of active site Tyr is the lysine 200.

This sequence belongs to the short-chain dehydrogenases/reductases (SDR) family.

The enzyme catalyses xylitol + NADP(+) = L-xylulose + NADPH + H(+). It functions in the pathway carbohydrate degradation; L-arabinose degradation via L-arabinitol; D-xylulose 5-phosphate from L-arabinose (fungal route): step 3/5. Functionally, L-xylulose reductase involved in the catabolism of L-arabinose through an oxidoreductive pathway. Catalyzes the NADPH-dependent reduction of L-xylulose. Is also able to convert D-xylulose, D-ribulose, L-sorbose, and D-fructose to their corresponding polyols. The protein is L-xylulose reductase of Hypocrea jecorina (strain QM6a) (Trichoderma reesei).